The primary structure comprises 259 residues: Protein CWC15 homolog (259 aa).

The disordered stretch occupies residues 1-182 (MTTAARPTFD…EKKQEDERIR (182 aa)). Basic and acidic residues predominate over residues 52–71 (DENRNRDFRKELEEREREAR). Low complexity-rich tracts occupy residues 72-82 (SGTGATSSSSG) and 114-126 (QQQA…QQAA). A compositionally biased stretch (acidic residues) spans 129–150 (DADEPLDNDSSDSDSDSDDDDA). A coiled-coil region spans residues 150–182 (AALLAELQKIKQERLQETARRESEKKQEDERIR). A compositionally biased stretch (basic and acidic residues) spans 157 to 182 (QKIKQERLQETARRESEKKQEDERIR).

This sequence belongs to the CWC15 family.

Involved in pre-mRNA splicing. The chain is Protein CWC15 homolog (c12.1) from Drosophila melanogaster (Fruit fly).